We begin with the raw amino-acid sequence, 567 residues long: Putative laccase-17 (567 aa).

A signal peptide spans 1 to 22; sequence MPSRGCSCWLLSLALLCSLAAA. Plastocyanin-like domains are found at residues 30 to 146 and 158 to 310; these read VIRE…PRDG and ELAP…YGAA. Asparagine 76 carries an N-linked (GlcNAc...) asparagine glycan. Cu cation-binding residues include histidine 80, histidine 82, histidine 125, and histidine 127. N-linked (GlcNAc...) asparagine glycans are attached at residues asparagine 187, asparagine 241, asparagine 298, asparagine 312, asparagine 327, asparagine 365, asparagine 368, asparagine 378, asparagine 388, and asparagine 430. A Plastocyanin-like 3 domain is found at 415 to 551; the sequence is DFPANPPVQF…AMAFLVDDGV (137 aa). The Cu cation site is built by histidine 468, histidine 471, histidine 473, histidine 530, cysteine 531, histidine 532, and histidine 536.

It belongs to the multicopper oxidase family. Cu cation is required as a cofactor.

The protein localises to the secreted. Its subcellular location is the extracellular space. It is found in the apoplast. It carries out the reaction 4 hydroquinone + O2 = 4 benzosemiquinone + 2 H2O. Lignin degradation and detoxification of lignin-derived products. The chain is Putative laccase-17 (LAC17) from Oryza sativa subsp. japonica (Rice).